Here is a 509-residue protein sequence, read N- to C-terminus: Autophagy-related protein 16 (509 aa).

7 WD repeats span residues 223-262 (AHEG…LIKS), 265-304 (GSLG…VRHT), 307-347 (GHTD…CTNT), 349-388 (LFTS…LLSE), 391-430 (GHSS…ICGT), 437-478 (RLAS…SILK), and 480-509 (QTSP…CTWT).

It belongs to the WD repeat ATG16 family.

Functionally, may play a role in autophagy. This Arabidopsis thaliana (Mouse-ear cress) protein is Autophagy-related protein 16.